The primary structure comprises 120 residues: uncharacterized protein (120 aa).

Residues 3–120 (IRYKKAFEKI…EKCEICHGSE (118 aa)) enclose the N-acetyltransferase domain.

This is an uncharacterized protein from Bacillus methanolicus.